Reading from the N-terminus, the 162-residue chain is Phenazine biosynthesis protein PhzB1 (162 aa).

Belongs to the PhzA/PhzB family. Homodimer.

The protein operates within antibiotic biosynthesis; phenazine biosynthesis. Its function is as follows. Involved in the biosynthesis of the antibiotic phenazine, a nitrogen-containing heterocyclic molecule. PhzB1 (operon phzA1B1C1E1F1G1) has a role in the biosynthesis of the phenazine during planktonic growth. In Pseudomonas aeruginosa (strain ATCC 15692 / DSM 22644 / CIP 104116 / JCM 14847 / LMG 12228 / 1C / PRS 101 / PAO1), this protein is Phenazine biosynthesis protein PhzB1.